A 456-amino-acid chain; its full sequence is Carnosine N-methyltransferase unmet (456 aa).

S-adenosyl-L-methionine-binding residues include R154, G195, E216, D282, F283, and C299. 3 residues coordinate carnosine: D303, H334, and Y385. The span at 402-418 shows a compositional bias: basic and acidic residues; the sequence is RGKRKASREPHDLIVRE. The disordered stretch occupies residues 402–456; that stretch reads RGKRKASREPHDLIVREDSEEEGEQQPERNETEEKQQLKPLATANCETEIKEQPS. Phosphoserine is present on residues S408 and S420. Over residues 427–438 the composition is skewed to basic and acidic residues; it reads QPERNETEEKQQ.

It belongs to the carnosine N-methyltransferase family. In terms of assembly, associates with the GATOR2 complex; the interaction is probably direct and is inhibited by S-adenosyl-L-methionine binding. Associates with the GATOR1 complex; the interaction is probably indirect and mediated by the GATOR2 complex.

It carries out the reaction carnosine + S-adenosyl-L-methionine = anserine + S-adenosyl-L-homocysteine + H(+). Functionally, S-adenosyl-L-methionine-binding protein that acts as a sensor to signal methionine availability to the mTORC1 signaling pathway. Associates with the GATOR2 complex in the absence of methionine to inhibit mTORC1 signaling, but dissociates in the presence of the methionine derivative S-adenosyl-L-methionine; S-adenosyl-L-homocysteine binding does not induce dissociation. Required for mTORC1 pathway response to methionine starvation. Exerts a protective function on developing egg chambers by inhibiting mTORC1 signaling under starvation conditions. May also function as a N-methyltransferase that mediates the formation of anserine (beta-alanyl-N(Pi)-methyl-L-histidine) from carnosine. It is unclear whether this protein has retained N-methyltransferase activity or if it is an evolutionary intermediate whose substrate binding ability has been co-opted to function as a nutrient sensor for mTORC1 signaling. This is Carnosine N-methyltransferase unmet from Drosophila melanogaster (Fruit fly).